The chain runs to 600 residues: Elongation factor 4 (600 aa).

Positions 4–186 (KNVRNFCIIA…AIVNRIPPPK (183 aa)) constitute a tr-type G domain. GTP is bound by residues 16–21 (DHGKST) and 133–136 (NKID).

The protein belongs to the TRAFAC class translation factor GTPase superfamily. Classic translation factor GTPase family. LepA subfamily.

It is found in the cell inner membrane. It catalyses the reaction GTP + H2O = GDP + phosphate + H(+). In terms of biological role, required for accurate and efficient protein synthesis under certain stress conditions. May act as a fidelity factor of the translation reaction, by catalyzing a one-codon backward translocation of tRNAs on improperly translocated ribosomes. Back-translocation proceeds from a post-translocation (POST) complex to a pre-translocation (PRE) complex, thus giving elongation factor G a second chance to translocate the tRNAs correctly. Binds to ribosomes in a GTP-dependent manner. The sequence is that of Elongation factor 4 from Aquifex aeolicus (strain VF5).